A 709-amino-acid polypeptide reads, in one-letter code: Elongation factor G (709 aa).

Residues 10-286 (NKVRNIGIMA…AVVDFLPSPL (277 aa)) enclose the tr-type G domain. GTP-binding positions include 19 to 26 (AHIDAGKT), 83 to 87 (DTPGH), and 137 to 140 (NKMD).

It belongs to the TRAFAC class translation factor GTPase superfamily. Classic translation factor GTPase family. EF-G/EF-2 subfamily.

It is found in the cytoplasm. In terms of biological role, catalyzes the GTP-dependent ribosomal translocation step during translation elongation. During this step, the ribosome changes from the pre-translocational (PRE) to the post-translocational (POST) state as the newly formed A-site-bound peptidyl-tRNA and P-site-bound deacylated tRNA move to the P and E sites, respectively. Catalyzes the coordinated movement of the two tRNA molecules, the mRNA and conformational changes in the ribosome. The sequence is that of Elongation factor G from Corynebacterium glutamicum (strain R).